Consider the following 384-residue polypeptide: Cell adhesion molecule CEACAM18 (384 aa).

A signal peptide spans 1–30; it reads MDLSRPRWSLWRRVFLMASLLACGICQASG. N-linked (GlcNAc...) asparagine glycans are attached at residues N108, N112, N121, N162, and N270. In terms of domain architecture, Ig-like C2-type spans 227-314; that stretch reads PDYVLLRSNP…LIMYMDVRIQ (88 aa). C255 and C296 are oxidised to a cystine. The interval 358–384 is disordered; sequence QPLLNQDKSGSMSVHPRPEDKTRRASR. A compositionally biased stretch (polar residues) spans 359–369; sequence PLLNQDKSGSM. Residues 373-384 show a composition bias toward basic and acidic residues; it reads PRPEDKTRRASR.

This sequence belongs to the immunoglobulin superfamily. CEA family.

This is Cell adhesion molecule CEACAM18 from Homo sapiens (Human).